We begin with the raw amino-acid sequence, 956 residues long: Endogenous retrovirus group K member 8 Pol protein (956 aa).

The 189-residue stretch at 57 to 245 folds into the Reverse transcriptase domain; sequence LEKGHIEPSF…TPFHYLGMQI (189 aa). The short motif at 161-164 is the LPQG element; it reads LPQG. The short motif at 195–198 is the YXDD element; it reads YIDD. Residues 460-590 form the RNase H type-1 domain; the sequence is LENALTVFTD…ADLLVSSALI (131 aa). Residues Asp469, Glu497, Asp517, and Asp582 each contribute to the Mg(2+) site. The Integrase-type zinc-finger motif lies at 587–628; the sequence is SALIKAQELHALTHVNAAGLKNKFDVTWKQAKDIVQHCTQCQ. Residues His596, His600, Cys624, and Cys627 each coordinate Zn(2+). In terms of domain architecture, Integrase catalytic spans 642–803; that stretch reads RGLCPNALWQ…TSAEQHLTGK (162 aa). The segment at residues 811–859 is a DNA-binding region (integrase-type); the sequence is KLIWWKDNKNKTWEIGKVITWGRGFACVSPGENQLPVWIPTRHLKFYNE. Residues 864 to 890 are disordered; that stretch reads AKKSTSAETETPQSSTVDSQDEQNGDV. The span at 869–881 shows a compositional bias: polar residues; the sequence is SAETETPQSSTVD.

The protein belongs to the beta type-B retroviral polymerase family. HERV class-II K(HML-2) pol subfamily.

It catalyses the reaction DNA(n) + a 2'-deoxyribonucleoside 5'-triphosphate = DNA(n+1) + diphosphate. It carries out the reaction Endonucleolytic cleavage to 5'-phosphomonoester.. Its function is as follows. Early post-infection, the reverse transcriptase converts the viral RNA genome into double-stranded viral DNA. The RNase H domain of the reverse transcriptase performs two functions. It degrades the RNA template and specifically removes the RNA primer from the RNA/DNA hybrid. Following nuclear import, the integrase catalyzes the insertion of the linear, double-stranded viral DNA into the host cell chromosome. Endogenous Pol proteins may have kept, lost or modified their original function during evolution. This chain is Endogenous retrovirus group K member 8 Pol protein (ERVK-8), found in Homo sapiens (Human).